The primary structure comprises 316 residues: Homoserine kinase (316 aa).

An ATP-binding site is contributed by 97–107 (PPARGLGSSAS).

It belongs to the GHMP kinase family. Homoserine kinase subfamily.

The protein resides in the cytoplasm. The catalysed reaction is L-homoserine + ATP = O-phospho-L-homoserine + ADP + H(+). The protein operates within amino-acid biosynthesis; L-threonine biosynthesis; L-threonine from L-aspartate: step 4/5. Functionally, catalyzes the ATP-dependent phosphorylation of L-homoserine to L-homoserine phosphate. The sequence is that of Homoserine kinase from Prochlorococcus marinus (strain MIT 9313).